A 701-amino-acid chain; its full sequence is Cytosolic endo-beta-N-acetylglucosaminidase 2 (701 aa).

It belongs to the glycosyl hydrolase 85 family.

The protein resides in the cytoplasm. It localises to the cytosol. It carries out the reaction an N(4)-(oligosaccharide-(1-&gt;3)-[oligosaccharide-(1-&gt;6)]-beta-D-Man-(1-&gt;4)-beta-D-GlcNAc-(1-&gt;4)-alpha-D-GlcNAc)-L-asparaginyl-[protein] + H2O = an oligosaccharide-(1-&gt;3)-[oligosaccharide-(1-&gt;6)]-beta-D-Man-(1-&gt;4)-D-GlcNAc + N(4)-(N-acetyl-beta-D-glucosaminyl)-L-asparaginyl-[protein]. In terms of biological role, endoglycosidase that releases N-glycans from glycoproteins by cleaving the beta-1,4-glycosidic bond in the N,N'-diacetylchitobiose core. Involved in the production of high-mannose type N-glycans during plant development and fruit maturation. This is Cytosolic endo-beta-N-acetylglucosaminidase 2 from Arabidopsis thaliana (Mouse-ear cress).